The sequence spans 344 residues: MDDSMDYPDRDGDDLDQFQGTARSQVVQNQPHDEEVNLSESESFAGADEPPAAPRDASLIESHDMDEGPAAPARTLSPTGYEAGKHAPGGIANSDEAPPGAYNAQEYKHLNVGEDVRELFSYIGRYKPQTVELDTRIKPFIPDYIPAVGGIDEFIKVPRPDTKPDYLGLKVLDEPAAKQSDPTVLTLQLRQLSKEAPGAKADMVGRLEHTDENKAKKIQQWIASINDIHKAKPAATVNYSKRMPEIEALMQEWPPEVETFLKTMHMPSGDVELDIKTYARLVCTLLDIPVYDDPVESLHVLFTLYLEFKNNPIFRQHMEMENKLDGMSGGGGGMMGGGADVLGL.

Residues 1–16 (MDDSMDYPDRDGDDLD) are compositionally biased toward acidic residues. The segment at 1-100 (MDDSMDYPDR…IANSDEAPPG (100 aa)) is disordered. Over residues 18–30 (FQGTARSQVVQNQ) the composition is skewed to polar residues.

It belongs to the IFT46 family. Component of the IFT complex B, the core composed of IFT25, IFT27, IFT46, IFT52, IFT74, IFT81 and IFT88 as well as associated subunits IFT20, IFT57, IFT80 and IFT172. Interacts with IFT25, IFT52, IFT70, IFT88 and DAW1.

Its subcellular location is the cytoplasm. It localises to the cytoskeleton. It is found in the cilium basal body. The protein resides in the cell projection. The protein localises to the cilium. Its function is as follows. Forms part of a complex involved in intraflagellar transport (IFT), the bi-directional movement of particles required for the assembly, maintenance and functioning of primary cilia. Plays a role in maintaining IFT complex B stability. The protein is Intraflagellar transport protein 46 of Chlamydomonas reinhardtii (Chlamydomonas smithii).